The sequence spans 292 residues: uncharacterized protein (292 aa).

Residues 13-35 form a helical membrane-spanning segment; that stretch reads LFILFIIVVCIYLLPRVAINAFY.

Belongs to the serine esterase family.

Its subcellular location is the membrane. This is an uncharacterized protein from Salmonella typhimurium (strain LT2 / SGSC1412 / ATCC 700720).